Reading from the N-terminus, the 303-residue chain is NAD kinase (303 aa).

D85 acts as the Proton acceptor in catalysis. NAD(+) contacts are provided by residues 85 to 86 (DG), 159 to 160 (ND), R187, D189, 200 to 205 (TAYALS), A224, and Q258.

Belongs to the NAD kinase family. The cofactor is a divalent metal cation.

It localises to the cytoplasm. The enzyme catalyses NAD(+) + ATP = ADP + NADP(+) + H(+). Its function is as follows. Involved in the regulation of the intracellular balance of NAD and NADP, and is a key enzyme in the biosynthesis of NADP. Catalyzes specifically the phosphorylation on 2'-hydroxyl of the adenosine moiety of NAD to yield NADP. This Variovorax paradoxus (strain S110) protein is NAD kinase.